A 199-amino-acid polypeptide reads, in one-letter code: Fe/S biogenesis protein NfuA (199 aa).

2 residues coordinate [4Fe-4S] cluster: Cys-151 and Cys-154.

Belongs to the NfuA family. As to quaternary structure, homodimer. The cofactor is [4Fe-4S] cluster.

Functionally, involved in iron-sulfur cluster biogenesis. Binds a 4Fe-4S cluster, can transfer this cluster to apoproteins, and thereby intervenes in the maturation of Fe/S proteins. Could also act as a scaffold/chaperone for damaged Fe/S proteins. This is Fe/S biogenesis protein NfuA from Stenotrophomonas maltophilia (strain K279a).